Reading from the N-terminus, the 491-residue chain is UDP-N-acetylmuramate--L-alanine ligase (491 aa).

Position 126–132 (126–132) interacts with ATP; sequence GTHGKTT.

This sequence belongs to the MurCDEF family.

The protein resides in the cytoplasm. The enzyme catalyses UDP-N-acetyl-alpha-D-muramate + L-alanine + ATP = UDP-N-acetyl-alpha-D-muramoyl-L-alanine + ADP + phosphate + H(+). It functions in the pathway cell wall biogenesis; peptidoglycan biosynthesis. In terms of biological role, cell wall formation. The sequence is that of UDP-N-acetylmuramate--L-alanine ligase from Escherichia coli (strain SMS-3-5 / SECEC).